Reading from the N-terminus, the 257-residue chain is Imidazole glycerol phosphate synthase subunit HisF (257 aa).

Active-site residues include D11 and D130.

This sequence belongs to the HisA/HisF family. Heterodimer of HisH and HisF.

The protein resides in the cytoplasm. The catalysed reaction is 5-[(5-phospho-1-deoxy-D-ribulos-1-ylimino)methylamino]-1-(5-phospho-beta-D-ribosyl)imidazole-4-carboxamide + L-glutamine = D-erythro-1-(imidazol-4-yl)glycerol 3-phosphate + 5-amino-1-(5-phospho-beta-D-ribosyl)imidazole-4-carboxamide + L-glutamate + H(+). Its pathway is amino-acid biosynthesis; L-histidine biosynthesis; L-histidine from 5-phospho-alpha-D-ribose 1-diphosphate: step 5/9. IGPS catalyzes the conversion of PRFAR and glutamine to IGP, AICAR and glutamate. The HisF subunit catalyzes the cyclization activity that produces IGP and AICAR from PRFAR using the ammonia provided by the HisH subunit. The protein is Imidazole glycerol phosphate synthase subunit HisF of Shewanella sp. (strain ANA-3).